The sequence spans 325 residues: Tartrate-resistant acid phosphatase type 5 (325 aa).

An N-terminal signal peptide occupies residues 1 to 21 (MDTWTLLLVLHTSLLLPWAEG). Residues asparagine 116 and asparagine 147 are each glycosylated (N-linked (GlcNAc...) asparagine).

As to quaternary structure, exists either as monomer or, after proteolytic processing, as a dimer of two chains linked by disulfide bond(s). It depends on Fe cation as a cofactor.

The protein resides in the lysosome. It carries out the reaction a phosphate monoester + H2O = an alcohol + phosphate. In Oryctolagus cuniculus (Rabbit), this protein is Tartrate-resistant acid phosphatase type 5 (ACP5).